The chain runs to 612 residues: Proton channel OTOP1 (612 aa).

A compositionally biased stretch (low complexity) spans 1–46 (MLEGLGSPASPRAAASASVAGSSGPAACSPPSSSAPRSPESPAPRR). Positions 1–50 (MLEGLGSPASPRAAASASVAGSSGPAACSPPSSSAPRSPESPAPRRGGVR) are disordered. Residues 1–58 (MLEGLGSPASPRAAASASVAGSSGPAACSPPSSSAPRSPESPAPRRGGVRASVPQKLA) are Cytoplasmic-facing. A helical transmembrane segment spans residues 59-80 (EMLSSQYGLIVFVAGLLLLLAW). At 81–88 (AVHAAGVS) the chain is on the extracellular side. Residues 89 to 112 (KSDLLCFLTALMLLQLLWMLWYVG) form a helical membrane-spanning segment. The Cytoplasmic portion of the chain corresponds to 113–130 (RSSAHRRLFRLKDTHAGA). A helical transmembrane segment spans residues 131-153 (GWLRGSITLFAVITVILGCLKIG). Residues 154-163 (YFIGFSECLS) lie on the Extracellular side of the membrane. Residues 164–188 (ATEGVFPVTHSVHTLLQVYFLWGHA) traverse the membrane as a helical segment. Topologically, residues 189 to 196 (KDIIQSFK) are cytoplasmic. Residues 197–223 (TLERFGVIHSVFTNLLLWANGVLNESK) form a helical membrane-spanning segment. At 224–264 (HQLNEHKERLITLGFGNITTVLDDHTPQCNCTPPTLCTAIS) the chain is on the extracellular side. A helical membrane pass occupies residues 265 to 290 (HGIYYLYPFNIEYQILASTMLYVLWK). The Cytoplasmic segment spans residues 291-311 (NIGRKVDSHQHQKMQFKSDGV). Residues 312 to 334 (MVGAVLGLTVLAATIAVVVVYLI) traverse the membrane as a helical segment. The Extracellular portion of the chain corresponds to 335–344 (HIGRSKTKSE). Residues 345–370 (SALIMFYLYAITLLMLMGAAGLAGIR) form a helical membrane-spanning segment. Topologically, residues 371-388 (IYRIDEKSLDESKNPARK) are cytoplasmic. A helical transmembrane segment spans residues 389 to 413 (LDSDLLVGTASGSWLISWGSILAIL). At 414–423 (CAEGHPRYTW) the chain is on the extracellular side. A helical membrane pass occupies residues 424–444 (YNLPYSILAIVEKYIQNLFIF). At 445–544 (ESIHREPEKL…QGNAKRKVLR (100 aa)) the chain is on the cytoplasmic side. A disordered region spans residues 499–525 (ANGNVCMRESHDKEEEKQEESSWGGSP). Residues 506–518 (RESHDKEEEKQEE) show a composition bias toward basic and acidic residues. The chain crosses the membrane as a helical span at residues 545–563 (NIAAFLFLCNISLWIPPAF). Topologically, residues 564–581 (GCRPEYDNGLEEIVFGFE) are extracellular. A helical transmembrane segment spans residues 582 to 605 (PWIIVVNLAMPFSIFYRMHAAASL). Residues 606 to 612 (FEVYCKI) lie on the Cytoplasmic side of the membrane.

It belongs to the otopetrin family. Homodimer. Interacts with STAT1, independently of STAT1 phosphorylation status.

Its subcellular location is the cell membrane. It is found in the cell projection. The protein localises to the microvillus. The catalysed reaction is H(+)(in) = H(+)(out). With respect to regulation, activated by both acid and alkali, with proton influx in response to extracellular acid and proton efflux during alkali stimulation. Inhibited by Zn(2+); this inhibition is thought to be pH-sensitive. Currents evoked in response to mild acid (pH 6.0) stimulus may also be mildly potentiated by exposure to Zn(2+). Activated by NH(4)Cl. Its function is as follows. Proton-selective ion channel. Biphasically modulated by acid and alkali, mediating proton influx and efflux in response to extracellular acid and base stimulation, respectively. Sour taste receptor, which carries inward currents in response to extracellular acidification. Sensor for ammonium chloride (NH(4)Cl) in taste receptor cells. NH(4)Cl acts by increasing the intracellular pH, thereby generating a driving force for proton entry through OTOP1 channel. Might also participate in alkaline sensation. Plays a role in the regulation of Ca(2+) flux in response to purigenic (ATP, ADP and UDP) stimuli, leading to increase in cytosolic Ca(2+) due to influx of extracellular calcium. May play this role by inhibiting P2Y purinoceptor-mediated Ca(2+) release in a Ca(2+)-dependent manner and promote an influx of Ca(2+) in response to ATP. Through this mechanism and possibly others, plays a role in the formation and function of calcium carbonate-based structures in the vestibular system of the inner ear, called otoconia, that sense gravity and linear acceleration. In obesity, may attenuate adipose tissue inflammation, through the negative regulation of IFNG signaling, hence may play an adaptive role in the maintainance of metabolic homeostasis. Following alkali activation, may also be permeable Na(+), K(+), Cs(+) and Li(+). The protein is Proton channel OTOP1 of Homo sapiens (Human).